A 389-amino-acid polypeptide reads, in one-letter code: Chalcone synthase 1 (389 aa).

Cysteine 164 is an active-site residue.

It belongs to the thiolase-like superfamily. Chalcone/stilbene synthases family.

The catalysed reaction is (E)-4-coumaroyl-CoA + 3 malonyl-CoA + 3 H(+) = 2',4,4',6'-tetrahydroxychalcone + 3 CO2 + 4 CoA. It functions in the pathway secondary metabolite biosynthesis; flavonoid biosynthesis. Its function is as follows. The primary product of this enzyme is 4,2',4',6'-tetrahydroxychalcone (also termed naringenin-chalcone or chalcone) which can under specific conditions spontaneously isomerize into naringenin. The chain is Chalcone synthase 1 (CHS1) from Camellia sinensis (Tea plant).